The sequence spans 192 residues: Flavin prenyltransferase UbiX (192 aa).

Residues 10 to 12, S36, 92 to 95, and R127 each bind FMN; these read GAS and SMTT. Positions 157 and 173 each coordinate dimethylallyl phosphate.

The protein belongs to the UbiX/PAD1 family.

The catalysed reaction is dimethylallyl phosphate + FMNH2 = prenylated FMNH2 + phosphate. Functionally, flavin prenyltransferase that catalyzes the synthesis of the prenylated FMN cofactor (prenyl-FMN) for 4-hydroxy-3-polyprenylbenzoic acid decarboxylase UbiD. The prenyltransferase is metal-independent and links a dimethylallyl moiety from dimethylallyl monophosphate (DMAP) to the flavin N5 and C6 atoms of FMN. The protein is Flavin prenyltransferase UbiX of Chlamydia pneumoniae (Chlamydophila pneumoniae).